The primary structure comprises 97 residues: uncharacterized protein (97 aa).

This is an uncharacterized protein from Shigella flexneri.